A 2410-amino-acid chain; its full sequence is Cell wall alpha-1,3-glucan synthase ags1 (2410 aa).

Phosphoserine occurs at positions 1643, 1644, and 1651. T1653 carries the post-translational modification Phosphothreonine. The interval 1685–1706 (SLSLGSRRGPGHTTEDDASDGL) is disordered. Residues S1738 and S1812 each carry the phosphoserine modification. The interval 1796-1827 (QDDLSDPARSVDSDSVSPPLPPFVAGSNPNAR) is disordered. A compositionally biased stretch (low complexity) spans 1802–1827 (PARSVDSDSVSPPLPPFVAGSNPNAR).

This sequence belongs to the glycosyltransferase group 1 family. In terms of assembly, interacts with sad1.

The catalysed reaction is [(1-&gt;3)-alpha-D-glucosyl](n) + UDP-alpha-D-glucose = [(1-&gt;3)-alpha-D-glucosyl](n+1) + UDP + H(+). In terms of biological role, required for alpha-1,3-glucan and alpha-1,4-glucan production which are required for cell wall synthesis. The protein is Cell wall alpha-1,3-glucan synthase ags1 (ags1) of Schizosaccharomyces pombe (strain 972 / ATCC 24843) (Fission yeast).